A 313-amino-acid chain; its full sequence is Ribosomal RNA small subunit methyltransferase H (313 aa).

Residues Gly51–His53, Asp71, Phe98, Asp119, and Gln126 contribute to the S-adenosyl-L-methionine site. The interval Glu293–Ser313 is disordered.

Belongs to the methyltransferase superfamily. RsmH family.

It localises to the cytoplasm. It carries out the reaction cytidine(1402) in 16S rRNA + S-adenosyl-L-methionine = N(4)-methylcytidine(1402) in 16S rRNA + S-adenosyl-L-homocysteine + H(+). Its function is as follows. Specifically methylates the N4 position of cytidine in position 1402 (C1402) of 16S rRNA. The polypeptide is Ribosomal RNA small subunit methyltransferase H (Roseiflexus sp. (strain RS-1)).